The primary structure comprises 243 residues: Putative glycerophosphodiester phosphodiesterase YhdW (243 aa).

The GP-PDE domain maps to 1–238 (MYIIAHRGAS…DYPDFIIKDG (238 aa)). His6 functions as the Proton acceptor in the catalytic mechanism. Ca(2+) contacts are provided by Glu33 and Asp35. His48 acts as the Proton donor in catalysis. Glu107 contacts Ca(2+).

This sequence belongs to the glycerophosphoryl diester phosphodiesterase family. Requires Ca(2+) as cofactor.

The enzyme catalyses a sn-glycero-3-phosphodiester + H2O = an alcohol + sn-glycerol 3-phosphate + H(+). Functionally, glycerophosphodiester phosphodiesterase hydrolyzes glycerophosphodiesters into glycerol-3-phosphate (G3P) and the corresponding alcohol. The protein is Putative glycerophosphodiester phosphodiesterase YhdW (yhdW) of Bacillus subtilis (strain 168).